Consider the following 900-residue polypeptide: DNA mismatch repair protein MutS (900 aa).

Position 637–644 (637–644 (GPNMAGKS)) interacts with ATP.

The protein belongs to the DNA mismatch repair MutS family.

Its function is as follows. This protein is involved in the repair of mismatches in DNA. It is possible that it carries out the mismatch recognition step. This protein has a weak ATPase activity. The sequence is that of DNA mismatch repair protein MutS from Methanosarcina acetivorans (strain ATCC 35395 / DSM 2834 / JCM 12185 / C2A).